We begin with the raw amino-acid sequence, 129 residues long: Small ribosomal subunit protein uS11 (129 aa).

This sequence belongs to the universal ribosomal protein uS11 family. As to quaternary structure, part of the 30S ribosomal subunit. Interacts with proteins S7 and S18. Binds to IF-3.

Located on the platform of the 30S subunit, it bridges several disparate RNA helices of the 16S rRNA. Forms part of the Shine-Dalgarno cleft in the 70S ribosome. The sequence is that of Small ribosomal subunit protein uS11 from Nitratidesulfovibrio vulgaris (strain ATCC 29579 / DSM 644 / CCUG 34227 / NCIMB 8303 / VKM B-1760 / Hildenborough) (Desulfovibrio vulgaris).